The primary structure comprises 560 residues: Phenylalanine--tRNA ligase beta subunit (560 aa).

Residues 279–354 form the B5 domain; it reads LTPKEFEVDL…IAYGYNNIEP (76 aa). Mg(2+) contacts are provided by D332, D338, E341, and D342.

The protein belongs to the phenylalanyl-tRNA synthetase beta subunit family. Type 2 subfamily. As to quaternary structure, tetramer of two alpha and two beta subunits. The cofactor is Mg(2+).

It localises to the cytoplasm. It carries out the reaction tRNA(Phe) + L-phenylalanine + ATP = L-phenylalanyl-tRNA(Phe) + AMP + diphosphate + H(+). This Thermococcus sibiricus (strain DSM 12597 / MM 739) protein is Phenylalanine--tRNA ligase beta subunit.